The following is a 376-amino-acid chain: Phosphoglycerate kinase (376 aa).

Valine 1, aspartate 2, phenylalanine 3, asparagine 4, arginine 17, serine 40, histidine 41, glycine 43, arginine 44, leucine 99, arginine 100, histidine 147, and arginine 148 together coordinate (2R)-3-phosphoglycerate. Residue glycine 191 coordinates ADP. Residue glycine 191 participates in CDP binding. Alanine 192 and lysine 193 together coordinate AMP. Alanine 192 contacts ATP. Position 192 (alanine 192) interacts with Mg(2+). Residue aspartate 196 coordinates CDP. Aspartate 196 is a binding site for Mg(2+). Lysine 197 is an AMP binding site. Lysine 197 serves as a coordination point for ATP. Glycine 215 contacts ADP. CDP is bound at residue glycine 215. 2 residues coordinate AMP: glycine 216 and glycine 290. Positions 216 and 290 each coordinate ATP. 2 residues coordinate CDP: glycine 315 and phenylalanine 320. ADP is bound at residue phenylalanine 320. Residue glutamate 321 coordinates AMP. ATP-binding residues include glutamate 321, aspartate 352, and threonine 353. Aspartate 352 is a binding site for Mg(2+).

This sequence belongs to the phosphoglycerate kinase family. Monomer. Mg(2+) is required as a cofactor.

The catalysed reaction is (2R)-3-phosphoglycerate + ATP = (2R)-3-phospho-glyceroyl phosphate + ADP. The protein operates within carbohydrate degradation; glycolysis; pyruvate from D-glyceraldehyde 3-phosphate: step 2/5. The chain is Phosphoglycerate kinase (PGK) from Glaucoma chattoni.